The primary structure comprises 298 residues: Protoheme IX farnesyltransferase (298 aa).

9 helical membrane-spanning segments follow: residues 16 to 36 (VVAL…PDMP), 45 to 65 (ALGF…NQLL), 93 to 113 (VFAG…VNVI), 114 to 134 (TAVL…VYLK), 141 to 161 (IVIG…AVTG), 172 to 192 (SLLV…LAIF), 223 to 243 (VLLA…VFYL), 244 to 264 (GGAI…LNPP), and 277 to 297 (IVYL…LPWV).

The protein belongs to the UbiA prenyltransferase family. Protoheme IX farnesyltransferase subfamily.

It localises to the cell inner membrane. It catalyses the reaction heme b + (2E,6E)-farnesyl diphosphate + H2O = Fe(II)-heme o + diphosphate. The protein operates within porphyrin-containing compound metabolism; heme O biosynthesis; heme O from protoheme: step 1/1. Its function is as follows. Converts heme B (protoheme IX) to heme O by substitution of the vinyl group on carbon 2 of heme B porphyrin ring with a hydroxyethyl farnesyl side group. This Xanthomonas euvesicatoria pv. vesicatoria (strain 85-10) (Xanthomonas campestris pv. vesicatoria) protein is Protoheme IX farnesyltransferase.